Reading from the N-terminus, the 556-residue chain is Formate--tetrahydrofolate ligase (556 aa).

65-72 lines the ATP pocket; sequence TPAGEGKS.

It belongs to the formate--tetrahydrofolate ligase family.

The catalysed reaction is (6S)-5,6,7,8-tetrahydrofolate + formate + ATP = (6R)-10-formyltetrahydrofolate + ADP + phosphate. Its pathway is one-carbon metabolism; tetrahydrofolate interconversion. The protein is Formate--tetrahydrofolate ligase of Clostridium perfringens (strain ATCC 13124 / DSM 756 / JCM 1290 / NCIMB 6125 / NCTC 8237 / Type A).